The primary structure comprises 227 residues: Translation initiation factor 6 (227 aa).

Belongs to the eIF-6 family.

In terms of biological role, binds to the 50S ribosomal subunit and prevents its association with the 30S ribosomal subunit to form the 70S initiation complex. The polypeptide is Translation initiation factor 6 (Methanococcus maripaludis (strain C5 / ATCC BAA-1333)).